Reading from the N-terminus, the 202-residue chain is Na(+)-translocating NADH-quinone reductase subunit E (202 aa).

The next 6 membrane-spanning stretches (helical) occupy residues 5 to 25 (VSLF…FLGM), 35 to 55 (VSTA…TVPL), 81 to 101 (FLGL…LEMF), 114 to 134 (GVFL…LFMV), 144 to 164 (VVYG…LAGI), and 180 to 200 (LGIT…FGGM).

It belongs to the NqrDE/RnfAE family. Composed of six subunits; NqrA, NqrB, NqrC, NqrD, NqrE and NqrF.

The protein resides in the cell inner membrane. The enzyme catalyses a ubiquinone + n Na(+)(in) + NADH + H(+) = a ubiquinol + n Na(+)(out) + NAD(+). Its function is as follows. NQR complex catalyzes the reduction of ubiquinone-1 to ubiquinol by two successive reactions, coupled with the transport of Na(+) ions from the cytoplasm to the periplasm. NqrA to NqrE are probably involved in the second step, the conversion of ubisemiquinone to ubiquinol. This Psychrobacter arcticus (strain DSM 17307 / VKM B-2377 / 273-4) protein is Na(+)-translocating NADH-quinone reductase subunit E.